The sequence spans 370 residues: Putative L-lysine 2,3-aminomutase aq_454 (370 aa).

One can recognise a Radical SAM core domain in the interval 107 to 322; it reads HRYPDRVLLN…RGRLSGFGIP (216 aa). [4Fe-4S] cluster is bound by residues Cys121, Cys125, and Cys128. Lys334 carries the N6-(pyridoxal phosphate)lysine modification.

Belongs to the radical SAM superfamily. KamA family. [4Fe-4S] cluster serves as cofactor. Pyridoxal 5'-phosphate is required as a cofactor.

The protein is Putative L-lysine 2,3-aminomutase aq_454 of Aquifex aeolicus (strain VF5).